The sequence spans 462 residues: Glycine--tRNA ligase (462 aa).

Substrate contacts are provided by Arg-100 and Glu-174. Residues 206–208 (RNE), 216–221 (FRTREF), 290–291 (EL), and 334–337 (GADR) each bind ATP. Residue 221 to 225 (FEQME) coordinates substrate. Substrate is bound at residue 330 to 334 (EPSLG).

It belongs to the class-II aminoacyl-tRNA synthetase family. As to quaternary structure, homodimer.

It localises to the cytoplasm. It carries out the reaction tRNA(Gly) + glycine + ATP = glycyl-tRNA(Gly) + AMP + diphosphate. Functionally, catalyzes the attachment of glycine to tRNA(Gly). The sequence is that of Glycine--tRNA ligase from Alkaliphilus metalliredigens (strain QYMF).